Consider the following 51-residue polypeptide: Insulin (51 aa).

3 cysteine pairs are disulfide-bonded: Cys7/Cys37, Cys19/Cys50, and Cys36/Cys41.

This sequence belongs to the insulin family. Heterodimer of a B chain and an A chain linked by two disulfide bonds.

It localises to the secreted. Insulin decreases blood glucose concentration. It increases cell permeability to monosaccharides, amino acids and fatty acids. It accelerates glycolysis, the pentose phosphate cycle, and glycogen synthesis in liver. The polypeptide is Insulin (ins) (Anguilla rostrata (American eel)).